Consider the following 249-residue polypeptide: Probable transcriptional regulatory protein AB57_1731 (249 aa).

This sequence belongs to the TACO1 family.

It localises to the cytoplasm. This is Probable transcriptional regulatory protein AB57_1731 from Acinetobacter baumannii (strain AB0057).